Here is a 635-residue protein sequence, read N- to C-terminus: MSETATTNKETRGFQSEVKQLLHLMIHSLYSNKEIFLRELISNASDAVDKLRFQALSHPDLYQGDAELGVKLSFDKDKNTLTISDNGIGMTRDEVIENLGTIAKSGTAEFFSKLSQEQSKNSQLIGQFGVGFYSAFIVADAVTVRTRAAGSAPADAVQWYSKGEGEYTVETINKESRGTDIILHLREEGKEFLSEWRLRDVISKYSDHIGIPVYIQTSVMDEEGKATEETKWEQINKAQALWTRAKSEVTDEEYKEFYKHVSHDFADPLVWSHNKVEGKNDYTSLLYIPAKAPWDLFNREHKHGLKLYVQRVFIMDDAAQFMPSYLRFVRGLIDSNDLPLNVSREILQDNKITQSLRQACTKRVLTMLERMASNDADNYQKFWKEFGLVMKEGPAEDFANREKIASLLRFASTHIDSAEQTISLASYVERMKEGQDKIYYLTADSYTAAKNSPHLEQFKSKGIEVILMFDRIDEWLMNYLPEFEGKAFQSITKAGLDLSQFEDEAEKEKHKETEEQFKSVVERLKGYLGSRVKEVRTTFKLANTPAVVVTDDYEMGTQMAKLLAAAGQPVPEVKYILEVNPEHALVKRMADEADEQTFGRWAEVLLGQAMLAERGSMEDPSQFLGAVNQLLAPSH.

The segment at 1 to 344 is a; substrate-binding; sequence MSETATTNKE…SNDLPLNVSR (344 aa). The tract at residues 345–561 is b; the sequence is EILQDNKITQ…DYEMGTQMAK (217 aa). Positions 562 to 635 are c; that stretch reads LLAAAGQPVP…AVNQLLAPSH (74 aa).

The protein belongs to the heat shock protein 90 family. In terms of assembly, homodimer.

The protein localises to the cytoplasm. Its function is as follows. Molecular chaperone. Has ATPase activity. This Vibrio cholerae serotype O1 (strain ATCC 39541 / Classical Ogawa 395 / O395) protein is Chaperone protein HtpG.